The chain runs to 228 residues: Cytochrome c oxidase subunit 2 (228 aa).

The Mitochondrial intermembrane segment spans residues 1 to 26; sequence MATWANLGLQDSSSPLMEQLNFFHDH. The chain crosses the membrane as a helical span at residues 27-47; it reads TLLILTMITILVGYIMGMLMF. The Mitochondrial matrix segment spans residues 48–60; it reads NQFTNRYLLHGQT. Residues 61-81 traverse the membrane as a helical segment; the sequence is IEIIWTVLPAIILMFIALPSL. Over 82 to 228 the chain is Mitochondrial intermembrane; sequence RLLYLMDEIN…FIKWITNMTN (147 aa). Residues His-161, Cys-196, Glu-198, Cys-200, His-204, and Met-207 each contribute to the Cu cation site. Position 198 (Glu-198) interacts with Mg(2+).

The protein belongs to the cytochrome c oxidase subunit 2 family. In terms of assembly, component of the cytochrome c oxidase (complex IV, CIV), a multisubunit enzyme composed of a catalytic core of 3 subunits and several supernumerary subunits. The complex exists as a monomer or a dimer and forms supercomplexes (SCs) in the inner mitochondrial membrane with ubiquinol-cytochrome c oxidoreductase (cytochrome b-c1 complex, complex III, CIII). The cofactor is Cu cation.

The protein localises to the mitochondrion inner membrane. It catalyses the reaction 4 Fe(II)-[cytochrome c] + O2 + 8 H(+)(in) = 4 Fe(III)-[cytochrome c] + 2 H2O + 4 H(+)(out). Component of the cytochrome c oxidase, the last enzyme in the mitochondrial electron transport chain which drives oxidative phosphorylation. The respiratory chain contains 3 multisubunit complexes succinate dehydrogenase (complex II, CII), ubiquinol-cytochrome c oxidoreductase (cytochrome b-c1 complex, complex III, CIII) and cytochrome c oxidase (complex IV, CIV), that cooperate to transfer electrons derived from NADH and succinate to molecular oxygen, creating an electrochemical gradient over the inner membrane that drives transmembrane transport and the ATP synthase. Cytochrome c oxidase is the component of the respiratory chain that catalyzes the reduction of oxygen to water. Electrons originating from reduced cytochrome c in the intermembrane space (IMS) are transferred via the dinuclear copper A center (CU(A)) of subunit 2 and heme A of subunit 1 to the active site in subunit 1, a binuclear center (BNC) formed by heme A3 and copper B (CU(B)). The BNC reduces molecular oxygen to 2 water molecules using 4 electrons from cytochrome c in the IMS and 4 protons from the mitochondrial matrix. The chain is Cytochrome c oxidase subunit 2 (COXII) from Anopheles quadrimaculatus (Common malaria mosquito).